The primary structure comprises 890 residues: Translation initiation factor IF-2 (890 aa).

Positions 110 to 216 are disordered; that stretch reads ISKPISKAPQ…KKPLIKTQDH (107 aa). A compositionally biased stretch (basic residues) spans 135-148; sequence VPKRKGLVIIKKKR. Basic and acidic residues predominate over residues 184–199; sequence KSYNEPKNKENDDIKK. A compositionally biased stretch (basic residues) spans 200–210; that stretch reads QKVKKEKKKPL. Residues 387-554 form the tr-type G domain; sequence TRPPVVTIMG…NILLQAEILE (168 aa). The segment at 396-403 is G1; it reads GHVDHGKT. A GTP-binding site is contributed by 396–403; sequence GHVDHGKT. The segment at 421–425 is G2; sequence GITQH. The interval 442-445 is G3; that stretch reads DTPG. Residues 442–446 and 496–499 contribute to the GTP site; these read DTPGH and NKMD. Residues 496 to 499 form a G4 region; sequence NKMD. The segment at 532–534 is G5; it reads SAR.

The protein belongs to the TRAFAC class translation factor GTPase superfamily. Classic translation factor GTPase family. IF-2 subfamily.

It is found in the cytoplasm. Functionally, one of the essential components for the initiation of protein synthesis. Protects formylmethionyl-tRNA from spontaneous hydrolysis and promotes its binding to the 30S ribosomal subunits. Also involved in the hydrolysis of GTP during the formation of the 70S ribosomal complex. The chain is Translation initiation factor IF-2 from Aliarcobacter butzleri (strain RM4018) (Arcobacter butzleri).